The following is a 624-amino-acid chain: DNA mismatch repair protein MutL (624 aa).

This sequence belongs to the DNA mismatch repair MutL/HexB family.

In terms of biological role, this protein is involved in the repair of mismatches in DNA. It is required for dam-dependent methyl-directed DNA mismatch repair. May act as a 'molecular matchmaker', a protein that promotes the formation of a stable complex between two or more DNA-binding proteins in an ATP-dependent manner without itself being part of a final effector complex. This is DNA mismatch repair protein MutL from Chlorobium phaeobacteroides (strain DSM 266 / SMG 266 / 2430).